The primary structure comprises 363 residues: Neurogenic differentiation factor 2 (363 aa).

The disordered stretch occupies residues 1–116 (MLTRLFKEPS…VRRQKANARE (116 aa)). Residues 28–44 (EDSKTKDEEQERCRLGD) show a composition bias toward basic and acidic residues. A compositionally biased stretch (acidic residues) spans 64-83 (AGEEDYDEDVDEDDCGEEGD). A compositionally biased stretch (basic residues) spans 87–98 (PKKRGPKKRKMT). Residues 93–99 (KKRKMTP) carry the Nuclear localization signal motif. A bHLH domain is found at 107–159 (VRRQKANARERTRMHDLNSALDNLLKVVPCYSKTQKLSKIETLRLAKNYIWAL).

In terms of assembly, efficient DNA binding requires dimerization with another bHLH protein. As to expression, in adult, expressed strongly in brain and more weakly in skin, muscle, eye and ovary.

The protein resides in the nucleus. In terms of biological role, transcriptional regulator. Appears to mediate neuronal differentiation. The protein is Neurogenic differentiation factor 2 of Danio rerio (Zebrafish).